The chain runs to 199 residues: Recombination protein RecR (199 aa).

The C4-type zinc finger occupies 59–74 (CLNCGNVGTSDICALC). Positions 82–176 (GELCVVEDVA…KLTSLAQGVP (95 aa)) constitute a Toprim domain.

Belongs to the RecR family.

Functionally, may play a role in DNA repair. It seems to be involved in an RecBC-independent recombinational process of DNA repair. It may act with RecF and RecO. This is Recombination protein RecR from Ruegeria sp. (strain TM1040) (Silicibacter sp.).